Consider the following 267-residue polypeptide: Thyroxine 5-deiodinase (267 aa).

Topologically, residues 1–15 (MHDSGGVQMARALKH) are cytoplasmic. Residues 16–36 (AALCLMLLPRFLLAAVMLWLL) traverse the membrane as a helical; Signal-anchor for type II membrane protein segment. Residues 37–267 (DFLCIRKKVL…VNSQTAVLHV (231 aa)) are Extracellular-facing. The active site involves U131. Residue U131 is a non-standard amino acid, selenocysteine.

It belongs to the iodothyronine deiodinase family. Monomer. Homodimer. May undergo minor heretodimerization with DIO1 and DIO2.

The protein localises to the cell membrane. It localises to the endosome membrane. It catalyses the reaction 3,3',5'-triiodo-L-thyronine + iodide + A + H(+) = L-thyroxine + AH2. The catalysed reaction is 3,3'-diiodo-L-thyronine + iodide + A + H(+) = 3,3',5-triiodo-L-thyronine + AH2. It carries out the reaction 3-iodo-L-thyronine + iodide + A + H(+) = 3,5-diiodo-L-thyronine + AH2. The enzyme catalyses L-thyronine + iodide + A + H(+) = 3-iodo-L-thyronine + AH2. It catalyses the reaction 3',5'-diiodo-L-thyronine + iodide + A + H(+) = 3,3',5'-triiodo-L-thyronine + AH2. The catalysed reaction is 3'-iodo-L-thyronine + iodide + A + H(+) = 3,3'-diiodo-L-thyronine + AH2. It carries out the reaction 3,3',5'-triiodothyronamine + iodide + A + H(+) = 3,3',5,5'-tetraiodothyronamine + AH2. The enzyme catalyses 3',5'-diiodothyronamine + iodide + A + H(+) = 3,3',5'-triiodothyronamine + AH2. It catalyses the reaction 3,3'-diiodothyronamine + iodide + A + H(+) = 3,3',5-triiodothyronamine + AH2. The catalysed reaction is 3-iodothyronamine + iodide + A + H(+) = 3,5-diiodothyronamine + AH2. It carries out the reaction 3'-iodothyronamine + iodide + A + H(+) = 3,3'-diiodothyronamine + AH2. The enzyme catalyses thyronamine + iodide + A + H(+) = 3-iodothyronamine + AH2. Its function is as follows. Plays a crucial role in the metabolism of thyroid hormones (TH) and has specific roles in TH activation and inactivation by deiodination. Catalyzes the deiodination of L-thyroxine (T4) to 3,3',5'-triiodothyronine (rT3), 3,5,3'-triiodothyronine (T3) to 3,3'-diiodothyronine (3,3'-T2), 3,5-diiodothyronine (3,5-T2) to 3-monoiodothyronine (3-T1), rT3 to 3',5'-diiodothyronine (3',5'-T2) and 3,3'-T2 to 3'-monoiodothyronine (3'-T1) via inner-ring deiodination (IRD). Catalyzes the deiodination of 3-T1 to L-thyronine (T0) via outer-ring deiodination (ORD). Catalyzes the tyrosyl ring deiodinations of 3,3',5,5'-tetraiodothyronamine, 3,3',5'-triiodothyronamine, 3,5,3'-triiodothyronamine, 3,5-diiodothyronamine, 3,3'-diiodothyronamine and 3-iodothyronamine. The polypeptide is Thyroxine 5-deiodinase (dio3) (Sparus aurata (Gilthead sea bream)).